We begin with the raw amino-acid sequence, 480 residues long: Glycogen synthase (480 aa).

K15 contributes to the ADP-alpha-D-glucose binding site.

It belongs to the glycosyltransferase 1 family. Bacterial/plant glycogen synthase subfamily.

It carries out the reaction [(1-&gt;4)-alpha-D-glucosyl](n) + ADP-alpha-D-glucose = [(1-&gt;4)-alpha-D-glucosyl](n+1) + ADP + H(+). The protein operates within glycan biosynthesis; glycogen biosynthesis. Synthesizes alpha-1,4-glucan chains using ADP-glucose. The sequence is that of Glycogen synthase from Rhizobium tropici.